Here is a 289-residue protein sequence, read N- to C-terminus: MQSISVLICVLLALSILNFTVASLTQRPIYAIAHRVLRNEAVTAALSHGANALEVDLTAWYFGWWADHDGKLFSAGSTARDLFKFIAQKQWTKDYNISFVWLDIKNPDFCRKGRPCSIEALRDLAREILEPAGIRVLYGFFETAESRGFKVIRDGLNSNEAVVLSGETSTILHLYNISGAGIPVKQMVMDFGDSWLRKGVDIYPELRYGSWKRDHGKLGKVFSWTSAQGDTEMVRYLLREAGIDGLIYGYQTDEYNDKSGPKSALKDIVDFVEAHSDTHRMATEDDAPW.

Residues 1–22 (MQSISVLICVLLALSILNFTVA) form the signal peptide. H34 is a catalytic residue. 3 residues coordinate Mg(2+): E54, D56, and D103. The SMD-tail signature appears at 282–289 (ATEDDAPW).

It belongs to the sphingomyelinase D/phospholipase D family. The cofactor is Mg(2+).

It localises to the secreted. It catalyses the reaction a sphingomyelin + H2O = an N-acylsphing-4-enine 1-phosphate + choline + H(+). Sphingomyelinase activity is reduced by 33 percent following addition of EDTA. Functionally, catalyzes the hydrolysis of sphingomyelin. Sphingomyelinases D are produced by some spider in their venoms, but also by arthropods such as ticks, or pathogenic bacteria and fungi. They might play a role in pathogenicity through different mechanisms, such as membrane destabilization and host cell penetration, but also pulmonary inflammation and cutaneous lesions. The sequence is that of Sphingomyelinase D from Aspergillus flavus (strain ATCC 200026 / FGSC A1120 / IAM 13836 / NRRL 3357 / JCM 12722 / SRRC 167).